A 142-amino-acid chain; its full sequence is Nucleoside diphosphate kinase (142 aa).

ATP is bound by residues lysine 11, phenylalanine 59, arginine 87, threonine 93, arginine 104, and asparagine 114. Histidine 117 serves as the catalytic Pros-phosphohistidine intermediate.

Belongs to the NDK family. Homotetramer. The cofactor is Mg(2+).

It localises to the cytoplasm. It catalyses the reaction a 2'-deoxyribonucleoside 5'-diphosphate + ATP = a 2'-deoxyribonucleoside 5'-triphosphate + ADP. The enzyme catalyses a ribonucleoside 5'-diphosphate + ATP = a ribonucleoside 5'-triphosphate + ADP. Functionally, major role in the synthesis of nucleoside triphosphates other than ATP. The ATP gamma phosphate is transferred to the NDP beta phosphate via a ping-pong mechanism, using a phosphorylated active-site intermediate. The sequence is that of Nucleoside diphosphate kinase from Yersinia pseudotuberculosis serotype O:1b (strain IP 31758).